Consider the following 158-residue polypeptide: SsrA-binding protein (158 aa).

Over residues lysine 133–arginine 148 the composition is skewed to basic and acidic residues. The tract at residues lysine 133–glycine 158 is disordered. A compositionally biased stretch (basic residues) spans glutamine 149–glycine 158.

It belongs to the SmpB family.

The protein localises to the cytoplasm. Required for rescue of stalled ribosomes mediated by trans-translation. Binds to transfer-messenger RNA (tmRNA), required for stable association of tmRNA with ribosomes. tmRNA and SmpB together mimic tRNA shape, replacing the anticodon stem-loop with SmpB. tmRNA is encoded by the ssrA gene; the 2 termini fold to resemble tRNA(Ala) and it encodes a 'tag peptide', a short internal open reading frame. During trans-translation Ala-aminoacylated tmRNA acts like a tRNA, entering the A-site of stalled ribosomes, displacing the stalled mRNA. The ribosome then switches to translate the ORF on the tmRNA; the nascent peptide is terminated with the 'tag peptide' encoded by the tmRNA and targeted for degradation. The ribosome is freed to recommence translation, which seems to be the essential function of trans-translation. This Jannaschia sp. (strain CCS1) protein is SsrA-binding protein.